The primary structure comprises 335 residues: Ferredoxin--NADP reductase (335 aa).

FAD is bound by residues aspartate 35, glutamine 43, tyrosine 48, alanine 88, phenylalanine 122, aspartate 287, and serine 328.

It belongs to the ferredoxin--NADP reductase type 2 family. As to quaternary structure, homodimer. The cofactor is FAD.

It carries out the reaction 2 reduced [2Fe-2S]-[ferredoxin] + NADP(+) + H(+) = 2 oxidized [2Fe-2S]-[ferredoxin] + NADPH. In Thermus thermophilus (strain ATCC BAA-163 / DSM 7039 / HB27), this protein is Ferredoxin--NADP reductase.